We begin with the raw amino-acid sequence, 423 residues long: Enolase (423 aa).

A (2R)-2-phosphoglycerate-binding site is contributed by glutamine 162. Glutamate 204 acts as the Proton donor in catalysis. Mg(2+) contacts are provided by aspartate 241, glutamate 284, and aspartate 311. Lysine 336, arginine 365, serine 366, and lysine 387 together coordinate (2R)-2-phosphoglycerate. The active-site Proton acceptor is the lysine 336.

The protein belongs to the enolase family. Requires Mg(2+) as cofactor.

Its subcellular location is the cytoplasm. It is found in the secreted. It localises to the cell surface. The enzyme catalyses (2R)-2-phosphoglycerate = phosphoenolpyruvate + H2O. It functions in the pathway carbohydrate degradation; glycolysis; pyruvate from D-glyceraldehyde 3-phosphate: step 4/5. Its function is as follows. Catalyzes the reversible conversion of 2-phosphoglycerate (2-PG) into phosphoenolpyruvate (PEP). It is essential for the degradation of carbohydrates via glycolysis. This is Enolase from Bartonella bacilliformis (strain ATCC 35685 / KC583 / Herrer 020/F12,63).